The chain runs to 282 residues: Protein Ku (282 aa).

One can recognise a Ku domain in the interval V9–K189.

Homodimer. Interacts with host LigD, maybe via the LigD Pol domain.

Its function is as follows. Required for replication of viruses with short cos ends (4 bases). Stimulates dsDNA end-joining by host LigD; in conjunction with M.smegmatis or M.tuberculosis LigD can reconstitute NHEJ in S.cerevisiae. Binds dsDNA with either blunt, 5'- or 3-overhangs, protecting it from host exonuclease degradation. The polypeptide is Protein Ku (206) (Mycobacterium phage Omega (Mycobacteriophage Omega)).